Here is a 340-residue protein sequence, read N- to C-terminus: Replication initiation protein (340 aa).

Residues 38-58 (PERKRTKRRRGEHSTKPKCEN) are disordered.

This chain is Replication initiation protein (repA1), found in Escherichia coli.